Reading from the N-terminus, the 281-residue chain is 2-dehydro-3-deoxyphosphooctonate aldolase (281 aa).

Belongs to the KdsA family.

The protein resides in the cytoplasm. It carries out the reaction D-arabinose 5-phosphate + phosphoenolpyruvate + H2O = 3-deoxy-alpha-D-manno-2-octulosonate-8-phosphate + phosphate. The protein operates within carbohydrate biosynthesis; 3-deoxy-D-manno-octulosonate biosynthesis; 3-deoxy-D-manno-octulosonate from D-ribulose 5-phosphate: step 2/3. Its pathway is bacterial outer membrane biogenesis; lipopolysaccharide biosynthesis. The protein is 2-dehydro-3-deoxyphosphooctonate aldolase of Pseudomonas savastanoi pv. phaseolicola (strain 1448A / Race 6) (Pseudomonas syringae pv. phaseolicola (strain 1448A / Race 6)).